The sequence spans 425 residues: Enolase (425 aa).

Residue Q163 participates in (2R)-2-phosphoglycerate binding. The active-site Proton donor is E205. Residues D242, E285, and D312 each coordinate Mg(2+). The (2R)-2-phosphoglycerate site is built by K337, R366, S367, and K388. K337 serves as the catalytic Proton acceptor.

It belongs to the enolase family. Mg(2+) is required as a cofactor.

It localises to the cytoplasm. It is found in the secreted. Its subcellular location is the cell surface. It carries out the reaction (2R)-2-phosphoglycerate = phosphoenolpyruvate + H2O. The protein operates within carbohydrate degradation; glycolysis; pyruvate from D-glyceraldehyde 3-phosphate: step 4/5. Its function is as follows. Catalyzes the reversible conversion of 2-phosphoglycerate (2-PG) into phosphoenolpyruvate (PEP). It is essential for the degradation of carbohydrates via glycolysis. The polypeptide is Enolase (Cereibacter sphaeroides (strain ATCC 17029 / ATH 2.4.9) (Rhodobacter sphaeroides)).